We begin with the raw amino-acid sequence, 174 residues long: Gamma-crystallin C (174 aa).

Beta/gamma crystallin 'Greek key' domains are found at residues 2–40 (GKITFYEDRGFQGRCYECSSDCPNLQTYFSRCNSIRVDS) and 41–83 (GCWM…RLIP). The residue at position 23 (Cys-23) is an S-methylcysteine. Positions 84-87 (HTGS) are connecting peptide. Beta/gamma crystallin 'Greek key' domains follow at residues 88 to 128 (HRMR…HVLE) and 129 to 171 (GCWV…RRVV).

Belongs to the beta/gamma-crystallin family.

In terms of biological role, crystallins are the dominant structural components of the vertebrate eye lens. The chain is Gamma-crystallin C (Crygc) from Rattus norvegicus (Rat).